We begin with the raw amino-acid sequence, 153 residues long: Transcription antitermination protein NusB (153 aa).

This sequence belongs to the NusB family.

Functionally, involved in transcription antitermination. Required for transcription of ribosomal RNA (rRNA) genes. Binds specifically to the boxA antiterminator sequence of the ribosomal RNA (rrn) operons. This Nitratidesulfovibrio vulgaris (strain ATCC 29579 / DSM 644 / CCUG 34227 / NCIMB 8303 / VKM B-1760 / Hildenborough) (Desulfovibrio vulgaris) protein is Transcription antitermination protein NusB.